Consider the following 181-residue polypeptide: Small ribosomal subunit protein bS16 (181 aa).

The tract at residues 150–181 (KKAAEEAAKAAAEAPAEEAAPAEEAATEAAAE) is disordered. A compositionally biased stretch (low complexity) spans 158–181 (KAAAEAPAEEAAPAEEAATEAAAE).

The protein belongs to the bacterial ribosomal protein bS16 family.

The sequence is that of Small ribosomal subunit protein bS16 from Bacteroides fragilis (strain ATCC 25285 / DSM 2151 / CCUG 4856 / JCM 11019 / LMG 10263 / NCTC 9343 / Onslow / VPI 2553 / EN-2).